A 364-amino-acid polypeptide reads, in one-letter code: UDP-3-O-acylglucosamine N-acyltransferase (364 aa).

His-258 serves as the catalytic Proton acceptor.

This sequence belongs to the transferase hexapeptide repeat family. LpxD subfamily. Homotrimer.

The enzyme catalyses a UDP-3-O-[(3R)-3-hydroxyacyl]-alpha-D-glucosamine + a (3R)-hydroxyacyl-[ACP] = a UDP-2-N,3-O-bis[(3R)-3-hydroxyacyl]-alpha-D-glucosamine + holo-[ACP] + H(+). It participates in bacterial outer membrane biogenesis; LPS lipid A biosynthesis. Catalyzes the N-acylation of UDP-3-O-acylglucosamine using 3-hydroxyacyl-ACP as the acyl donor. Is involved in the biosynthesis of lipid A, a phosphorylated glycolipid that anchors the lipopolysaccharide to the outer membrane of the cell. In Burkholderia orbicola (strain MC0-3), this protein is UDP-3-O-acylglucosamine N-acyltransferase.